The chain runs to 209 residues: U1 small nuclear ribonucleoprotein C (209 aa).

The Matrin-type zinc-finger motif lies at 4–36; that stretch reads HYCDYCDVFLTHDSASVRKAHNSGRNHLANVRD. Over residues 72 to 87 the composition is skewed to low complexity; the sequence is PQHLQAPPQGGFAPPM. The disordered stretch occupies residues 72 to 209; that stretch reads PQHLQAPPQG…RARMMGPGGR (138 aa). 2 stretches are compositionally biased toward pro residues: residues 93-150 and 159-191; these read GGFP…PFPP and PGAP…PTNP.

The protein belongs to the U1 small nuclear ribonucleoprotein C family. As to quaternary structure, U1 snRNP is composed of the 7 core Sm proteins B/B', D1, D2, D3, E, F and G that assemble in a heptameric protein ring on the Sm site of the small nuclear RNA to form the core snRNP, and at least 3 U1 snRNP-specific proteins U1-70K, U1-A and U1-C. U1-C interacts with U1 snRNA and the 5' splice-site region of the pre-mRNA.

The protein localises to the nucleus. Component of the spliceosomal U1 snRNP, which is essential for recognition of the pre-mRNA 5' splice-site and the subsequent assembly of the spliceosome. U1-C is directly involved in initial 5' splice-site recognition for both constitutive and regulated alternative splicing. The interaction with the 5' splice-site seems to precede base-pairing between the pre-mRNA and the U1 snRNA. Stimulates commitment or early (E) complex formation by stabilizing the base pairing of the 5' end of the U1 snRNA and the 5' splice-site region. The chain is U1 small nuclear ribonucleoprotein C from Coprinopsis cinerea (strain Okayama-7 / 130 / ATCC MYA-4618 / FGSC 9003) (Inky cap fungus).